A 286-amino-acid chain; its full sequence is ATP synthase gamma chain (286 aa).

It belongs to the ATPase gamma chain family. F-type ATPases have 2 components, CF(1) - the catalytic core - and CF(0) - the membrane proton channel. CF(1) has five subunits: alpha(3), beta(3), gamma(1), delta(1), epsilon(1). CF(0) has three main subunits: a, b and c.

It is found in the cell inner membrane. Its function is as follows. Produces ATP from ADP in the presence of a proton gradient across the membrane. The gamma chain is believed to be important in regulating ATPase activity and the flow of protons through the CF(0) complex. The sequence is that of ATP synthase gamma chain from Pseudomonas putida (strain ATCC 700007 / DSM 6899 / JCM 31910 / BCRC 17059 / LMG 24140 / F1).